Consider the following 197-residue polypeptide: Imidazoleglycerol-phosphate dehydratase (197 aa).

Belongs to the imidazoleglycerol-phosphate dehydratase family.

It localises to the cytoplasm. The enzyme catalyses D-erythro-1-(imidazol-4-yl)glycerol 3-phosphate = 3-(imidazol-4-yl)-2-oxopropyl phosphate + H2O. The protein operates within amino-acid biosynthesis; L-histidine biosynthesis; L-histidine from 5-phospho-alpha-D-ribose 1-diphosphate: step 6/9. In Hahella chejuensis (strain KCTC 2396), this protein is Imidazoleglycerol-phosphate dehydratase.